The primary structure comprises 168 residues: Small ribosomal subunit protein bS16 (168 aa).

The segment at 110–168 is disordered; the sequence is LAEAEGGPSNEATQPKKKKAPAKKAASDIEATADPAGNADKSEPAAEGEDATVAGATEG.

The protein belongs to the bacterial ribosomal protein bS16 family.

The protein is Small ribosomal subunit protein bS16 of Mycobacterium sp. (strain JLS).